Here is a 210-residue protein sequence, read N- to C-terminus: Small heat shock protein hspG6 (210 aa).

A sHSP domain is found at 34-210 (KTIIDKLPPM…YSNTIKININ (177 aa)). A disordered region spans residues 93 to 151 (VIEKSTSSSTLDSKEDEPSIEEFEDDIKPKSKSDNTTVSTTTTATTKENKEDENKTKST). Residues 126–138 (DNTTVSTTTTATT) show a composition bias toward low complexity. Over residues 139–151 (KENKEDENKTKST) the composition is skewed to basic and acidic residues.

Belongs to the small heat shock protein (HSP20) family.

The polypeptide is Small heat shock protein hspG6 (hspG6) (Dictyostelium discoideum (Social amoeba)).